A 1391-amino-acid chain; its full sequence is DNA-directed RNA polymerase subunit beta'' (1391 aa).

The Zn(2+) site is built by C220, C291, C298, and C301.

The protein belongs to the RNA polymerase beta' chain family. RpoC2 subfamily. In terms of assembly, in plastids the minimal PEP RNA polymerase catalytic core is composed of four subunits: alpha, beta, beta', and beta''. When a (nuclear-encoded) sigma factor is associated with the core the holoenzyme is formed, which can initiate transcription. The cofactor is Zn(2+).

The protein resides in the plastid. Its subcellular location is the chloroplast. The enzyme catalyses RNA(n) + a ribonucleoside 5'-triphosphate = RNA(n+1) + diphosphate. DNA-dependent RNA polymerase catalyzes the transcription of DNA into RNA using the four ribonucleoside triphosphates as substrates. In Gossypium barbadense (Sea Island cotton), this protein is DNA-directed RNA polymerase subunit beta''.